The primary structure comprises 895 residues: Cellulose 1,4-beta-cellobiosidase (895 aa).

An N-terminal signal peptide occupies residues 1 to 27 (MNFRRMLCAAIVLTIVLSIMLPSTVFA). In terms of domain architecture, CBM-cenC spans 40-199 (NDLLYERTFD…YLDDVSLYDP (160 aa)). The interval 199–240 (PRFVKPVEYVLPQPDVRVNQVGYLPFAKKYATVVSSSTSPLK) is linker. The interval 241–815 (WQLLNSANQV…WVTAYLDEID (575 aa)) is catalytic. The active-site Nucleophile is D386. Active-site residues include H737, D786, and E795. The Dockerin domain occupies 828 to 894 (PEVIYGDCNG…ILKEIDVLPH (67 aa)).

This sequence belongs to the glycosyl hydrolase 9 (cellulase E) family.

The protein localises to the secreted. It carries out the reaction Hydrolysis of (1-&gt;4)-beta-D-glucosidic linkages in cellulose and cellotetraose, releasing cellobiose from the non-reducing ends of the chains.. With respect to regulation, inhibited by cellobiose. The chain is Cellulose 1,4-beta-cellobiosidase (celK) from Acetivibrio thermocellus (Hungateiclostridium thermocellum).